Consider the following 149-residue polypeptide: UPF0756 membrane protein BBR47_12340 (149 aa).

Helical transmembrane passes span Ile6–Ala26, Pro48–Gly68, Ile86–Pro106, and Leu120–Ile140.

Belongs to the UPF0756 family.

It is found in the cell membrane. This is UPF0756 membrane protein BBR47_12340 from Brevibacillus brevis (strain 47 / JCM 6285 / NBRC 100599).